A 143-amino-acid chain; its full sequence is Nucleoside diphosphate kinase (143 aa).

Residues Lys11, Phe59, Arg87, Thr93, Arg104, and Asn114 each coordinate ATP. His117 serves as the catalytic Pros-phosphohistidine intermediate.

It belongs to the NDK family. Homotetramer. It depends on Mg(2+) as a cofactor.

The protein localises to the cytoplasm. The enzyme catalyses a 2'-deoxyribonucleoside 5'-diphosphate + ATP = a 2'-deoxyribonucleoside 5'-triphosphate + ADP. It catalyses the reaction a ribonucleoside 5'-diphosphate + ATP = a ribonucleoside 5'-triphosphate + ADP. Its function is as follows. Major role in the synthesis of nucleoside triphosphates other than ATP. The ATP gamma phosphate is transferred to the NDP beta phosphate via a ping-pong mechanism, using a phosphorylated active-site intermediate. The chain is Nucleoside diphosphate kinase from Shewanella halifaxensis (strain HAW-EB4).